A 303-amino-acid polypeptide reads, in one-letter code: Probable 5-dehydro-4-deoxyglucarate dehydratase (303 aa).

The protein belongs to the DapA family.

It carries out the reaction 5-dehydro-4-deoxy-D-glucarate + H(+) = 2,5-dioxopentanoate + CO2 + H2O. It functions in the pathway carbohydrate acid metabolism; D-glucarate degradation; 2,5-dioxopentanoate from D-glucarate: step 2/2. The protein is Probable 5-dehydro-4-deoxyglucarate dehydratase of Ectopseudomonas mendocina (strain ymp) (Pseudomonas mendocina).